Consider the following 344-residue polypeptide: Lysophosphatidic acid receptor 6 (344 aa).

Over 1–25 the chain is Extracellular; sequence MVSSNGSQCPYDDSFKYTLYGCMFS. A glycan (N-linked (GlcNAc...) asparagine) is linked at Asn5. The chain crosses the membrane as a helical span at residues 26–46; that stretch reads MVFVLGLISNCVAIYIFICAL. The Cytoplasmic portion of the chain corresponds to 47–56; that stretch reads KVRNETTTYM. A helical transmembrane segment spans residues 57 to 77; it reads INLAMSDLLFVFTLPFRIFYF. Residues 78 to 90 lie on the Extracellular side of the membrane; sequence ATRNWPFGDLLCK. Cys89 and Cys168 are disulfide-bonded. Residues 91-111 form a helical membrane-spanning segment; sequence ISVMLFYTNMYGSILFLTCIS. At 112–134 the chain is on the cytoplasmic side; it reads VDRFLAIVYPFKSKTLRTKRNAK. The helical transmembrane segment at 135 to 155 threads the bilayer; the sequence is IVCIAVWFTVMGGSAPAVFFQ. At 156-183 the chain is on the extracellular side; it reads STHSQGNNTSEACFENFPAATWKTYLSR. Asn162 and Asn163 each carry an N-linked (GlcNAc...) asparagine glycan. Residues 184 to 204 form a helical membrane-spanning segment; sequence IVIFIEIVGFFIPLILNVTCS. Topologically, residues 205–230 are cytoplasmic; it reads SMVLRTLNKPVTLSRSKMNKTKVLKM. Residues 231 to 251 form a helical membrane-spanning segment; it reads IFVHLVIFCFCFVPYNINLIL. Residues 252–272 are Extracellular-facing; it reads YSLMRTQTFVNCSVVAAVRTM. A glycan (N-linked (GlcNAc...) asparagine) is linked at Asn262. Residues 273-293 form a helical membrane-spanning segment; sequence YPITLCIAVSNCCFDPIVYYF. Cys284 carries the S-palmitoyl cysteine lipid modification. At 294–344 the chain is on the cytoplasmic side; sequence TSDTIQNSIKMKNWSVRRSDSRFSEVQGTENFIQHNLQTLKNKIFDNESAI.

This sequence belongs to the G-protein coupled receptor 1 family. Ubiquitously expressed. Detected in the hair follicles and skin (at protein level).

It localises to the cell membrane. Its function is as follows. Binds to oleoyl-L-alpha-lysophosphatidic acid (LPA). Intracellular cAMP is involved in the receptor activation. Important for the maintenance of hair growth and texture. This is Lysophosphatidic acid receptor 6 (Lpar6) from Mus musculus (Mouse).